The chain runs to 244 residues: Large ribosomal subunit protein bL25 (244 aa).

The tract at residues 197–244 (ADVEAEAAEAALAKEAATEAAEEEETEKPASEAEASGEAEQADTDKKE) is disordered. Residues 204–215 (AEAALAKEAATE) are compositionally biased toward low complexity.

This sequence belongs to the bacterial ribosomal protein bL25 family. CTC subfamily. As to quaternary structure, part of the 50S ribosomal subunit; part of the 5S rRNA/L5/L18/L25 subcomplex. Contacts the 5S rRNA. Binds to the 5S rRNA independently of L5 and L18.

Its function is as follows. This is one of the proteins that binds to the 5S RNA in the ribosome where it forms part of the central protuberance. This Coxiella burnetii (strain CbuK_Q154) (Coxiella burnetii (strain Q154)) protein is Large ribosomal subunit protein bL25.